The primary structure comprises 722 residues: Pre-B-cell leukemia transcription factor-interacting protein 1 (722 aa).

Polar residues predominate over residues 1–10 (MASCPDSDNS). The interval 1–180 (MASCPDSDNS…TAAVDGEDQA (180 aa)) is disordered. A compositionally biased stretch (basic and acidic residues) spans 88–97 (DDGHGTKRPG). Ser-133, Ser-144, Ser-145, and Ser-146 each carry phosphoserine. Phosphothreonine is present on Thr-150. At Ser-166 the chain carries Phosphoserine. Coiled coils occupy residues 266 to 346 (LLLD…RGVD) and 373 to 401 (DTSLLEQHKQLEAEAKALRQELQKQWQLL). Residues 442 to 453 (QGINTGRSSNDS) show a composition bias toward polar residues. Disordered stretches follow at residues 442 to 562 (QGIN…SPDS) and 691 to 722 (RRSKKKEKQPWNHRAVGPREEHSRHPHHYHQG). Basic and acidic residues-rich tracts occupy residues 465-536 (HPRE…DPKV) and 546-559 (SGERQKHSWGKDNS). The Nuclear localization signal signature appears at 482–502 (QKAEHWKLKKEESGQDRKKSW). Phosphoserine is present on Ser-559. The Nuclear localization signal motif lies at 686–711 (DKALKRRSKKKEKQPWNHRAVGPREE).

Interacts with ESR1, PBX1, PBX2 and PBX3. Interacts with TEX11.

It localises to the cytoplasm. The protein resides in the cytoskeleton. The protein localises to the nucleus. Its function is as follows. Regulator of pre-B-cell leukemia transcription factors (BPXs) function. Inhibits the binding of PBX1-HOX complex to DNA and blocks the transcriptional activity of E2A-PBX1. Tethers estrogen receptor-alpha (ESR1) to microtubules and allows them to influence estrogen receptors-alpha signaling. The sequence is that of Pre-B-cell leukemia transcription factor-interacting protein 1 (Pbxip1) from Rattus norvegicus (Rat).